We begin with the raw amino-acid sequence, 423 residues long: F-box protein At1g52495 (423 aa).

The F-box domain maps to 49-95 (KLKDVHLPLDLIVEILKKLPTKSLMRFRCVSKPWSFIISKRRDFVES).

The protein is F-box protein At1g52495 of Arabidopsis thaliana (Mouse-ear cress).